The sequence spans 1143 residues: MHVMNCVSLVSDKENGNIATAPGFMIGQTPPPAPPPPPPPPPPSPPCSCSREECPSSPPPPPPPPLPGEPPIPPPPPGLPPTTHMNGYSHLGKKKRMRSFFWKTIPEEQVRGKTNIWTLAARQEHHYQIDTKTIEELFGQQEDTTKSSLPRRGRTLNSSFREAREEITILDAKRSMNIGIFLKQFKKSPRSIVEDIHQGKSEHYGSETLREFLKFLPESEEVKKLKAFSGDVSKLSLADSFLYGLIQVPNYSLRIEAMVLKKEFLPSCSSLYTDITVLRTAIKELMSCEELHSILHLVLQAGNIMNAGGYAGNAVGFKLSSLLKLADTKANKPGMNLLHFVAQEAQKKDTILLNFSEKLHHVQKTARLSLENTEAELHLLFVRTKSLKENIQRDGELCQQMEDFLQFAIEKLRELECWKQELQDEAYTLIDFFCEDKKTMKLDECFQIFRDFCTKFNKAVKDNHDREAQELRQLQRLKEQEQKQRSWATGELGAFGRSSSENDVELLTKKGAEGLLPFLHPRPISPSSPSYRPPNTRRSRLSLGPSADRELLTFLESSTGSPEEPNKFHSLPRSSPRQARPTIACLEPAEVRHQDSSFAHKPQASGGQEEAPNPPSAQAHQLAAAQPENHASAFPRARRQGVSVLRKRYSEPVSLGSAQSPPLSPLALGIKEHELVTGLAQFNLQGSQGMEETSQLTLSDFSPMELESVGHRGPQSLSASSSSLTPMGRDALGSLSPALEDGKAAPDEPGSAALGSVGSSDPENKDPRPLFCISDTTDCSLTLDCSEGTDSRPRGGDPEEGGEGDGSMSSGVGEMGDSQVSSNPTSSPPGEAPAPVSVDSEPSCKGGLPRDKPTKRKDVVAPKRGSLKEASPGASKPGSARRSQGAVAKSVRTLTASENESMRKVMPITKSSRGAGWRRPELSSRGPSQNPPSSTDTVWSRQNSVRRASTGAEEQRLPRGSSGSSSTRPGRDVPLQPRGSFKKPSAKPLRNLPRQKPEENKTCRAHSEGPESPKEEPKTPSVPSVPHELPRVPSFARNTVASSSRSMRTDLPPVAKAPGITRTVSQRQLRVKGDPEDAAPKDSSTLRRASSARAPKKRPESAEGPSANTEAPLKARGAGERASLRRKDSSRTTLGRILNPLRK.

The interval Gly16–Ser89 is disordered. Composition is skewed to pro residues over residues Thr29–Pro46 and Ser56–Pro80. The FH2 domain occupies Gly87–Gln482. Position 500 is a phosphoserine (Ser500). The disordered stretch occupies residues Pro517 to Arg638. Over residues Pro521–Pro534 the composition is skewed to low complexity. Residues Ser650, Ser660, and Ser664 each carry the phosphoserine modification. The interval Leu706–Lys1143 is disordered. Residues Gly806–Ser818 are compositionally biased toward low complexity. The span at Leu848–Ala861 shows a compositional bias: basic and acidic residues. The segment covering Arg925–Arg947 has biased composition (polar residues). The span at Pro958 to Arg968 shows a compositional bias: low complexity. The segment at Gly960 to Leu1086 is MTBD; microtubule-binding domain. The span at Gln995–Lys1018 shows a compositional bias: basic and acidic residues. Over residues Ala1036–Ser1046 the composition is skewed to polar residues. Basic and acidic residues-rich tracts occupy residues Val1071–Pro1080 and Gly1117–Ser1130.

Interacts with CEP170.

It localises to the cell projection. Its subcellular location is the cilium. It is found in the golgi apparatus. Its function is as follows. Microtubule-associated formin which regulates both actin and microtubule dynamics. Induces microtubule acetylation and stabilization and actin stress fiber formation. Regulates Golgi ribbon formation. Required for normal cilia assembly. Early in cilia assembly, may assist in the maturation and positioning of the centrosome/basal body, and once cilia assembly has initiated, may also promote cilia elongation by inhibiting disassembly. The chain is FH2 domain-containing protein 1 (FHDC1) from Homo sapiens (Human).